The following is a 953-amino-acid chain: Xylosyltransferase 1 (953 aa).

Residues 1 to 17 lie on the Cytoplasmic side of the membrane; sequence MVAAPCARRLARRSHSA. A helical; Signal-anchor for type II membrane protein transmembrane segment spans residues 18 to 38; it reads LLAALMVLLLHTLVVWNFSSL. Residues 39-953 lie on the Lumenal side of the membrane; the sequence is DSGAGEQRRA…GAVKPDGRLR (915 aa). Over residues 48–62 the composition is skewed to low complexity; sequence AGAAAGAAEQQQPAA. Disordered stretches follow at residues 48 to 67 and 74 to 251; these read AGAAAGAAEQQQPAAPRRER and LPAA…APKC. A compositionally biased stretch (gly residues) spans 79 to 97; the sequence is GGPGGRAGGGGARGGGPGG. Basic and acidic residues predominate over residues 138-154; it reads KVRTDSNNENSVPKDFE. Over residues 156–165 the composition is skewed to polar residues; the sequence is VDNSNFAPRT. 2 stretches are compositionally biased toward basic and acidic residues: residues 170–197 and 205–216; these read HQPELAKKPPSRQKEHLQRKLDALDKRQ and GPKEVLPPREKA. Asparagine 219 carries N-linked (GlcNAc...) asparagine glycosylation. Disulfide bonds link cysteine 251–cysteine 279, cysteine 295–cysteine 536, cysteine 555–cysteine 568, and cysteine 557–cysteine 566. Residues valine 327, aspartate 355, and 384–386 contribute to the UDP-alpha-D-xylose site; that span reads TIW. The N-linked (GlcNAc...) asparagine glycan is linked to asparagine 415. 488–489 is a binding site for UDP-alpha-D-xylose; the sequence is DW. UDP-alpha-D-xylose is bound by residues serine 569 and 592–593; that span reads RK. Cystine bridges form between cysteine 669–cysteine 921 and cysteine 914–cysteine 927. Residue asparagine 771 is glycosylated (N-linked (GlcNAc...) asparagine). Positions 933 to 953 are disordered; sequence SSFSPDPKSELGAVKPDGRLR.

It belongs to the glycosyltransferase 14 family. XylT subfamily. In terms of assembly, monomer. It depends on a divalent metal cation as a cofactor. In terms of processing, contains 7 disulfide bonds. Post-translationally, N-glycosylated. As to expression, detected in brain, spleen, kidney and testis, and at low levels in skeletal muscle.

It localises to the golgi apparatus membrane. The catalysed reaction is UDP-alpha-D-xylose + L-seryl-[protein] = 3-O-(beta-D-xylosyl)-L-seryl-[protein] + UDP + H(+). It participates in glycan metabolism; chondroitin sulfate biosynthesis. Its pathway is glycan metabolism; heparan sulfate biosynthesis. Its function is as follows. Catalyzes the first step in the biosynthesis of chondroitin sulfate and dermatan sulfate proteoglycans, such as DCN. Transfers D-xylose from UDP-D-xylose to specific serine residues of the core protein. Required for normal maturation of chondrocytes during bone development, normal onset of ossification and normal embryonic and postnatal skeleton development, especially of the long bones. This is Xylosyltransferase 1 (Xylt1) from Mus musculus (Mouse).